Consider the following 520-residue polypeptide: MSDTHPSQTTPRDAADSVATLSAPFPTMPGFAELGERFFTRLRPTPLPSAYLVSVAPNAAALLGMPVEAASEPDFIEAFVGNSVPDWADPLATVYSGHQFGVWAGQLGDGRAIRLAQAQTDTGPWEIQLKGAGLTPYSRMADGRAVLRSSIREYLCSEAMAALGVPTTRALSIIGSDAPVRRETIETAAVVTRLAPTFIRFGHFEHFAAHEDVAALRQLADFVINNFMPACREAAQPYQALLREVSLRTADMVAHWQAIGFCHGVMNTDNMSILGLTIDYGPFGFLDAFDANHICNHSDTQGRYAYSQQPQVAFWNLHCLAQALLPLWLEPGADEAARDGAVAQAREALDPFRDRYASEFFRHYRAKLGIHMPAGGDKEDEPLLTSLFQLLHEQHVDYTLFWRNLARISSADGSGDAPVRDLFLDRAAWDTWAESYRNRLRAEQSDDAARRVAMLAVNPKYVLRNHLAEIAIRRAREKDFSEVDRLLAVLSRPFDEQPEAEAYAALPPDWAGGLEVSCSS.

Positions 108, 110, 111, 130, 142, 143, 193, and 200 each coordinate ATP. Asp269 functions as the Proton acceptor in the catalytic mechanism. Residues Asn270 and Asp279 each contribute to the Mg(2+) site. Asp279 lines the ATP pocket.

Belongs to the SELO family. Requires Mg(2+) as cofactor. The cofactor is Mn(2+).

It carries out the reaction L-seryl-[protein] + ATP = 3-O-(5'-adenylyl)-L-seryl-[protein] + diphosphate. It catalyses the reaction L-threonyl-[protein] + ATP = 3-O-(5'-adenylyl)-L-threonyl-[protein] + diphosphate. The enzyme catalyses L-tyrosyl-[protein] + ATP = O-(5'-adenylyl)-L-tyrosyl-[protein] + diphosphate. The catalysed reaction is L-histidyl-[protein] + UTP = N(tele)-(5'-uridylyl)-L-histidyl-[protein] + diphosphate. It carries out the reaction L-seryl-[protein] + UTP = O-(5'-uridylyl)-L-seryl-[protein] + diphosphate. It catalyses the reaction L-tyrosyl-[protein] + UTP = O-(5'-uridylyl)-L-tyrosyl-[protein] + diphosphate. In terms of biological role, nucleotidyltransferase involved in the post-translational modification of proteins. It can catalyze the addition of adenosine monophosphate (AMP) or uridine monophosphate (UMP) to a protein, resulting in modifications known as AMPylation and UMPylation. The polypeptide is Protein nucleotidyltransferase YdiU (Cupriavidus pinatubonensis (strain JMP 134 / LMG 1197) (Cupriavidus necator (strain JMP 134))).